Here is a 254-residue protein sequence, read N- to C-terminus: 3-dehydroquinate dehydratase (254 aa).

3-dehydroquinate-binding positions include 47 to 49 and arginine 83; that span reads EFR. The Proton donor/acceptor role is filled by histidine 144. Lysine 171 (schiff-base intermediate with substrate) is an active-site residue. 3 residues coordinate 3-dehydroquinate: arginine 213, serine 232, and glutamine 236.

It belongs to the type-I 3-dehydroquinase family. In terms of assembly, homodimer.

It catalyses the reaction 3-dehydroquinate = 3-dehydroshikimate + H2O. Its pathway is metabolic intermediate biosynthesis; chorismate biosynthesis; chorismate from D-erythrose 4-phosphate and phosphoenolpyruvate: step 3/7. Involved in the third step of the chorismate pathway, which leads to the biosynthesis of aromatic amino acids. Catalyzes the cis-dehydration of 3-dehydroquinate (DHQ) and introduces the first double bond of the aromatic ring to yield 3-dehydroshikimate. In Neisseria meningitidis serogroup A / serotype 4A (strain DSM 15465 / Z2491), this protein is 3-dehydroquinate dehydratase.